A 326-amino-acid polypeptide reads, in one-letter code: Transposase for insertion sequence element IS4351 (326 aa).

Residues 156 to 317 form the Integrase catalytic domain; that stretch reads IDERPEIVEL…TPNEKFKQII (162 aa).

This sequence belongs to the transposase IS30 family.

Required for the transposition of the insertion element. The chain is Transposase for insertion sequence element IS4351 from Bacteroides fragilis.